The following is a 177-amino-acid chain: Large ribosomal subunit protein uL6 (177 aa).

The tract at residues 151–177 (LRPPEPYKGKGVRYAGENVRRKEGKKK) is disordered.

This sequence belongs to the universal ribosomal protein uL6 family. As to quaternary structure, part of the 50S ribosomal subunit.

Its function is as follows. This protein binds to the 23S rRNA, and is important in its secondary structure. It is located near the subunit interface in the base of the L7/L12 stalk, and near the tRNA binding site of the peptidyltransferase center. The chain is Large ribosomal subunit protein uL6 from Phenylobacterium zucineum (strain HLK1).